Here is a 226-residue protein sequence, read N- to C-terminus: UPF0173 metal-dependent hydrolase Minf_0129 (226 aa).

The protein belongs to the UPF0173 family.

In Methylacidiphilum infernorum (isolate V4) (Methylokorus infernorum (strain V4)), this protein is UPF0173 metal-dependent hydrolase Minf_0129.